The chain runs to 276 residues: Insulin-induced gene 1 protein (276 aa).

2 disordered regions span residues methionine 1 to serine 26 and alanine 49 to serine 73. At methionine 1 to leucine 83 the chain is on the cytoplasmic side. Positions glycine 16–alanine 25 are enriched in basic residues. The helical transmembrane segment at valine 84–valine 106 threads the bilayer. Over glutamine 107–alanine 125 the chain is Extracellular. Residues tryptophan 126 to tyrosine 143 traverse the membrane as a helical segment. Residues proline 144–arginine 158 are Cytoplasmic-facing. Glycyl lysine isopeptide (Lys-Gly) (interchain with G-Cter in ubiquitin) cross-links involve residues lysine 155 and lysine 157. Residues glutamate 159 to aspartate 181 traverse the membrane as a helical segment. Residues phenylalanine 182–asparagine 184 are Extracellular-facing. The helical transmembrane segment at asparagine 185 to phenylalanine 203 threads the bilayer. The Cytoplasmic segment spans residues aspartate 204–serine 208. Serine 206 bears the Phosphoserine mark. The chain crosses the membrane as a helical span at residues glycine 209–asparagine 230. Topologically, residues glycine 231 to arginine 244 are extracellular. Residues serine 245 to glycine 262 traverse the membrane as a helical segment. The Cytoplasmic segment spans residues arginine 263–aspartate 276. Residues proline 270–aspartate 276 carry the KxHxx motif.

Belongs to the INSIG family. As to quaternary structure, interacts with SCAP; interaction is direct and only takes place in the presence of sterols; it prevents interaction between SCAP and the coat protein complex II (COPII). Associates with the SCAP-SREBP complex (composed of SCAP and SREBF1/SREBP1 or SREBF2/SREBP2); association is mediated via its interaction with SCAP and only takes place in the presence of sterols. Interaction with SCAP is mutually exclusive with PAQR3. Interacts with HMGCR (via its SSD); the interaction, accelerated by sterols, leads to the recruitment of HMGCR to AMFR/gp78 for its ubiquitination by the sterol-mediated ERAD pathway. Interacts with AMFR/gp78 (via its membrane domain); the interaction recruits HMCR at the ER membrane for its ubiquitination and degradation by the sterol-mediated ERAD pathway. Interacts with SOAT2/ACAT2; leading to promote recruitment of AMFR/gp78 and subsequent ubiquitination of SOAT2/ACAT2. Interacts with RNF139. Interacts with RNF145. In terms of processing, phosphorylation at Ser-206 by PCK1 reduces binding to oxysterol, disrupting the interaction between INSIG1 and SCAP, thereby promoting nuclear translocation of SREBP proteins (SREBF1/SREBP1 or SREBF2/SREBP2) and subsequent transcription of downstream lipogenesis-related genes. Post-translationally, ubiquitinated by AMFR/gp78 in response to sterol deprivation, leading to its degradation: when the SCAP-SREBP complex becomes dissociated from INSIG1, INSIG1 is then ubiquitinated and degraded in proteasomes. Although ubiquitination is required for rapid INSIG1 degradation, it is not required for release of the SCAP-SREBP complex. Ubiquitinated by RNF139.

The protein resides in the endoplasmic reticulum membrane. Oxysterol-binding protein that mediates feedback control of cholesterol synthesis by controlling both endoplasmic reticulum to Golgi transport of SCAP and degradation of HMGCR. Acts as a negative regulator of cholesterol biosynthesis by mediating the retention of the SCAP-SREBP complex in the endoplasmic reticulum, thereby blocking the processing of sterol regulatory element-binding proteins (SREBPs) SREBF1/SREBP1 and SREBF2/SREBP2. Binds oxysterol, including 25-hydroxycholesterol, regulating interaction with SCAP and retention of the SCAP-SREBP complex in the endoplasmic reticulum. In presence of oxysterol, interacts with SCAP, retaining the SCAP-SREBP complex in the endoplasmic reticulum, thereby preventing SCAP from escorting SREBF1/SREBP1 and SREBF2/SREBP2 to the Golgi. Sterol deprivation or phosphorylation by PCK1 reduce oxysterol-binding, disrupting the interaction between INSIG1 and SCAP, thereby promoting Golgi transport of the SCAP-SREBP complex, followed by processing and nuclear translocation of SREBF1/SREBP1 and SREBF2/SREBP2. Also regulates cholesterol synthesis by regulating degradation of HMGCR: initiates the sterol-mediated ubiquitin-mediated endoplasmic reticulum-associated degradation (ERAD) of HMGCR via recruitment of the reductase to the ubiquitin ligases AMFR/gp78 and/or RNF139. Also regulates degradation of SOAT2/ACAT2 when the lipid levels are low: initiates the ubiquitin-mediated degradation of SOAT2/ACAT2 via recruitment of the ubiquitin ligases AMFR/gp78. This Bos taurus (Bovine) protein is Insulin-induced gene 1 protein.